The following is a 285-amino-acid chain: (3S)-malyl-CoA thioesterase (285 aa).

Substrate-binding residues include arginine 70 and glutamate 122. Residues glutamate 122 and aspartate 148 each coordinate Mg(2+).

Belongs to the HpcH/HpaI aldolase family. As to quaternary structure, homodimer or homotrimer. The cofactor is Mg(2+).

The catalysed reaction is (S)-malyl-CoA + H2O = (S)-malate + CoA + H(+). Catalyzes the hydrolysis of (3S)-malyl-CoA to (3S)-malate and free CoA. Inactive towards beta-methylmalyl-CoA and other CoA esters. This chain is (3S)-malyl-CoA thioesterase, found in Cereibacter sphaeroides (strain ATCC 17029 / ATH 2.4.9) (Rhodobacter sphaeroides).